The following is a 189-amino-acid chain: Probable chorismate pyruvate-lyase (189 aa).

The substrate site is built by Arg77, Leu115, and Glu174.

The protein belongs to the UbiC family.

It localises to the cytoplasm. It carries out the reaction chorismate = 4-hydroxybenzoate + pyruvate. It functions in the pathway cofactor biosynthesis; ubiquinone biosynthesis. In terms of biological role, removes the pyruvyl group from chorismate, with concomitant aromatization of the ring, to provide 4-hydroxybenzoate (4HB) for the ubiquinone pathway. The sequence is that of Probable chorismate pyruvate-lyase from Shewanella sp. (strain MR-7).